A 337-amino-acid chain; its full sequence is Ornithine carbamoyltransferase (337 aa).

Carbamoyl phosphate-binding positions include Ser57 to Thr60, Gln84, Arg108, and His135 to Gln138. Residues Asn167, Asp231, and Ser235–Met236 contribute to the L-ornithine site. Residues Cys272–Leu273 and Arg317 each bind carbamoyl phosphate.

Belongs to the aspartate/ornithine carbamoyltransferase superfamily. OTCase family.

The protein localises to the cytoplasm. The catalysed reaction is carbamoyl phosphate + L-ornithine = L-citrulline + phosphate + H(+). It participates in amino-acid degradation; L-arginine degradation via ADI pathway; carbamoyl phosphate from L-arginine: step 2/2. In terms of biological role, reversibly catalyzes the transfer of the carbamoyl group from carbamoyl phosphate (CP) to the N(epsilon) atom of ornithine (ORN) to produce L-citrulline. In Streptococcus equi subsp. zooepidemicus (strain MGCS10565), this protein is Ornithine carbamoyltransferase.